The sequence spans 635 residues: Glutamyl-tRNA(Gln) amidotransferase subunit E (635 aa).

The interval 415 to 437 (LPDGNTEYMRPLPGKARMYPETD) is disordered.

It belongs to the GatB/GatE family. GatE subfamily. Heterodimer of GatD and GatE.

It catalyses the reaction L-glutamyl-tRNA(Gln) + L-glutamine + ATP + H2O = L-glutaminyl-tRNA(Gln) + L-glutamate + ADP + phosphate + H(+). Allows the formation of correctly charged Gln-tRNA(Gln) through the transamidation of misacylated Glu-tRNA(Gln) in organisms which lack glutaminyl-tRNA synthetase. The reaction takes place in the presence of glutamine and ATP through an activated gamma-phospho-Glu-tRNA(Gln). The GatDE system is specific for glutamate and does not act on aspartate. This is Glutamyl-tRNA(Gln) amidotransferase subunit E from Pyrococcus horikoshii (strain ATCC 700860 / DSM 12428 / JCM 9974 / NBRC 100139 / OT-3).